The primary structure comprises 355 residues: Holliday junction branch migration complex subunit RuvB (355 aa).

The interval 4–190 is large ATPase domain (RuvB-L); sequence TDKLAAERII…FGIVARLEFY (187 aa). ATP-binding positions include Leu-29, Arg-30, Gly-71, Lys-74, Thr-75, Thr-76, 137–139, Arg-180, Tyr-190, and Arg-227; that span reads EDY. Residue Thr-75 coordinates Mg(2+). The tract at residues 191-261 is small ATPAse domain (RuvB-S); it reads NAEQLARIVT…VADAALKMLD (71 aa). Positions 264–355 are head domain (RuvB-H); that stretch reads AVGFDLMDRK…LPGLWDSAAT (92 aa). DNA contacts are provided by Arg-300, Arg-319, and Arg-324.

The protein belongs to the RuvB family. Homohexamer. Forms an RuvA(8)-RuvB(12)-Holliday junction (HJ) complex. HJ DNA is sandwiched between 2 RuvA tetramers; dsDNA enters through RuvA and exits via RuvB. An RuvB hexamer assembles on each DNA strand where it exits the tetramer. Each RuvB hexamer is contacted by two RuvA subunits (via domain III) on 2 adjacent RuvB subunits; this complex drives branch migration. In the full resolvosome a probable DNA-RuvA(4)-RuvB(12)-RuvC(2) complex forms which resolves the HJ.

It localises to the cytoplasm. It carries out the reaction ATP + H2O = ADP + phosphate + H(+). In terms of biological role, the RuvA-RuvB-RuvC complex processes Holliday junction (HJ) DNA during genetic recombination and DNA repair, while the RuvA-RuvB complex plays an important role in the rescue of blocked DNA replication forks via replication fork reversal (RFR). RuvA specifically binds to HJ cruciform DNA, conferring on it an open structure. The RuvB hexamer acts as an ATP-dependent pump, pulling dsDNA into and through the RuvAB complex. RuvB forms 2 homohexamers on either side of HJ DNA bound by 1 or 2 RuvA tetramers; 4 subunits per hexamer contact DNA at a time. Coordinated motions by a converter formed by DNA-disengaged RuvB subunits stimulates ATP hydrolysis and nucleotide exchange. Immobilization of the converter enables RuvB to convert the ATP-contained energy into a lever motion, pulling 2 nucleotides of DNA out of the RuvA tetramer per ATP hydrolyzed, thus driving DNA branch migration. The RuvB motors rotate together with the DNA substrate, which together with the progressing nucleotide cycle form the mechanistic basis for DNA recombination by continuous HJ branch migration. Branch migration allows RuvC to scan DNA until it finds its consensus sequence, where it cleaves and resolves cruciform DNA. This is Holliday junction branch migration complex subunit RuvB from Paraburkholderia xenovorans (strain LB400).